Consider the following 330-residue polypeptide: Probable pectinesterase 55 (330 aa).

A signal peptide spans 1-24; sequence MGTHRIILGLAALCCFCLPHLIEA. Residues asparagine 38 and asparagine 52 are each glycosylated (N-linked (GlcNAc...) asparagine). Residue aspartate 161 is the Proton donor of the active site. The Nucleophile role is filled by aspartate 182. Positions 243 and 245 each coordinate substrate. Residues asparagine 257 and asparagine 292 are each glycosylated (N-linked (GlcNAc...) asparagine).

This sequence belongs to the pectinesterase family.

The protein localises to the secreted. It is found in the cell wall. The enzyme catalyses [(1-&gt;4)-alpha-D-galacturonosyl methyl ester](n) + n H2O = [(1-&gt;4)-alpha-D-galacturonosyl](n) + n methanol + n H(+). The protein operates within glycan metabolism; pectin degradation; 2-dehydro-3-deoxy-D-gluconate from pectin: step 1/5. Functionally, acts in the modification of cell walls via demethylesterification of cell wall pectin. The sequence is that of Probable pectinesterase 55 (PME55) from Arabidopsis thaliana (Mouse-ear cress).